A 120-amino-acid polypeptide reads, in one-letter code: Large ribosomal subunit protein uL18 (120 aa).

The segment at Met1 to Leu22 is disordered. Basic residues predominate over residues Ala10–Ala20.

It belongs to the universal ribosomal protein uL18 family. As to quaternary structure, part of the 50S ribosomal subunit; part of the 5S rRNA/L5/L18/L25 subcomplex. Contacts the 5S and 23S rRNAs.

In terms of biological role, this is one of the proteins that bind and probably mediate the attachment of the 5S RNA into the large ribosomal subunit, where it forms part of the central protuberance. The polypeptide is Large ribosomal subunit protein uL18 (Bacillus velezensis (strain DSM 23117 / BGSC 10A6 / LMG 26770 / FZB42) (Bacillus amyloliquefaciens subsp. plantarum)).